Here is a 341-residue protein sequence, read N- to C-terminus: Phenazine O-methyltransferase PhzM (341 aa).

Residues aspartate 205 and 231–233 (GDF) each bind S-adenosyl-L-methionine. Histidine 251 serves as the catalytic Proton acceptor.

It belongs to the class I-like SAM-binding methyltransferase superfamily. Cation-independent O-methyltransferase family. Homodimer.

It carries out the reaction 1,6-dihydroxyphenazine + S-adenosyl-L-methionine = 1-hydroxy-6-methoxyphenazine + S-adenosyl-L-homocysteine + H(+). The catalysed reaction is 1-hydroxy-6-methoxyphenazine + S-adenosyl-L-methionine = 1,6-dimethoxyphenazine + S-adenosyl-L-homocysteine + H(+). The enzyme catalyses 1-hydroxy-6-methoxyphenazine N(10)-oxide + S-adenosyl-L-methionine = 1,6-dimethoxyphenazine N(5)-oxide + S-adenosyl-L-homocysteine. It catalyses the reaction 1,6-dihydroxyphenazine N(5),N(10)-dioxide + S-adenosyl-L-methionine = 1-hydroxy-6-methoxyphenazine N(5),N(10)-dioxide + S-adenosyl-L-homocysteine. It carries out the reaction 1-hydroxy-6-methoxyphenazine N(5),N(10)-dioxide + S-adenosyl-L-methionine = 1,6-dimethoxyphenazine N(5),N(10)-dioxide + S-adenosyl-L-homocysteine. Its function is as follows. Involved in the biosynthesis of phenazine natural products including myxin, an N(5),N(10)-dioxide phenazine antiobiotic, which has antimicrobial activity. O-methyltransferase, which converts iodinin (1,6-dihydroxyphenazine N(5),N(10)-dioxide) to myxin (1-hydroxy-6-methoxyphenazine N(5),N(10)-dioxide). Catalyzes both monomethoxy and dimethoxy formation of phenazine natural compounds. Acts on a wide variety of substrates, catalyzing O-methylation of phenazines with non-, mono- or di-N-oxide. Highest activity with 1,6-dihydroxyphenazine (DHP) as substrate. Less active with monohydroxy-containing and monohydroxy-monomethoxy-containing phenazines. Least active with non-phenazine substrates, such as 8-hydroxyquinoline and 6-hydroxyquinoline. Is not able to convert 1-hydroxyphenazine to 1-hydroxy-N5-methylphenazine (pyocyanine), hence does not function as an N-methyltransferase. The protein is Phenazine O-methyltransferase PhzM of Lysobacter antibioticus.